A 99-amino-acid polypeptide reads, in one-letter code: UPF0213 protein PC1_0597 (99 aa).

The GIY-YIG domain occupies 8–83; sequence PQWYLYILRT…KQLSKNQKER (76 aa).

Belongs to the UPF0213 family.

This Pectobacterium carotovorum subsp. carotovorum (strain PC1) protein is UPF0213 protein PC1_0597.